Here is a 229-residue protein sequence, read N- to C-terminus: MSNRGASLKGLFLAVLLVSNTLLTKEGVTSLPICPIGSVNCQVSLGELFDRAVKLSHYIHYLSSEIFNEFDERYAQGRGFITKAVNGCHTSSLTTPEDKEQAQQIHHEDLLNLVVGVLRSWNDPLIHLASEVQRIKEAPDTILWKAVEIEEQNKRLLEGMEKIVGRVHSGDAGNEIYSHWDGLPSLQLADEDSRLFAFYNLLHCLRRDSHKIDNYLKVLKCRLIHDSNC.

Positions 1-30 are cleaved as a signal peptide; the sequence is MSNRGASLKGLFLAVLLVSNTLLTKEGVTS. Cystine bridges form between Cys-34-Cys-41, Cys-88-Cys-204, and Cys-221-Cys-229.

This sequence belongs to the somatotropin/prolactin family.

It is found in the secreted. The chain is Prolactin (PRL) from Gallus gallus (Chicken).